The sequence spans 669 residues: Soluble guanylate cyclase 89Db (669 aa).

H104 provides a ligand contact to heme. The stretch at 430–458 forms a coiled coil; the sequence is QHCSKLEIMFEKEEQRSDELEKSLELADS. In terms of domain architecture, Guanylate cyclase spans 494–620; sequence SVIFIEVMNI…DTVNTASRME (127 aa).

It belongs to the adenylyl cyclase class-4/guanylyl cyclase family. As to quaternary structure, heterodimer; with Gyc88E, in the presence of magnesium or manganese. The cofactor is heme. In terms of tissue distribution, expressed in embryos in a segmental pattern in the ventral nerve cord (VNC) and in the brain, beginning at stage 13 and continuing through to stage 17. Colocalized with Gyc-89Db in several peripheral neurons that innervate trachea, basiconical sensilla and the sensory cones in the posterior segments of the embryo. Expression in wandering 3rd instar larvae is most prominent in a small cluster of cells located in the anterior medial region of each brain lobe. In the VNC, expression is found in scattered cells both laterally and at the midline.

It localises to the cytoplasm. The enzyme catalyses GTP = 3',5'-cyclic GMP + diphosphate. Its activity is regulated as follows. Probably not activated by nitric oxide (NO). Heterodimer exhibits some stimulation, compounds (SIN-1 and two of the NONOates) that were ineffective at stimulating Gyc-88E homodimer did stimulate the heterodimer. Its function is as follows. Heterodimers with Gyc88E are activated in response to changing oxygen concentrations, alerting flies to hypoxic environments. Under normal oxygen concentrations, oxygen binds to the heme group and results in low levels of guanylyl cyclase activity. When exposed to reduced oxygen concentrations, the oxygen dissociates from the heme group resulting in activation of the enzyme. In Drosophila melanogaster (Fruit fly), this protein is Soluble guanylate cyclase 89Db.